The sequence spans 338 residues: RNA 3'-terminal phosphate cyclase (338 aa).

ATP is bound by residues glutamine 103 and 283-287; that span reads YLADQ. Histidine 308 functions as the Tele-AMP-histidine intermediate in the catalytic mechanism.

The protein belongs to the RNA 3'-terminal cyclase family. Type 1 subfamily.

It localises to the cytoplasm. It carries out the reaction a 3'-end 3'-phospho-ribonucleotide-RNA + ATP = a 3'-end 2',3'-cyclophospho-ribonucleotide-RNA + AMP + diphosphate. Functionally, catalyzes the conversion of 3'-phosphate to a 2',3'-cyclic phosphodiester at the end of RNA. The mechanism of action of the enzyme occurs in 3 steps: (A) adenylation of the enzyme by ATP; (B) transfer of adenylate to an RNA-N3'P to produce RNA-N3'PP5'A; (C) and attack of the adjacent 2'-hydroxyl on the 3'-phosphorus in the diester linkage to produce the cyclic end product. The biological role of this enzyme is unknown but it is likely to function in some aspects of cellular RNA processing. The chain is RNA 3'-terminal phosphate cyclase from Escherichia coli O8 (strain IAI1).